The primary structure comprises 956 residues: Bifunctional glutamine synthetase adenylyltransferase/adenylyl-removing enzyme (956 aa).

Residues 1–450 (MENMSEQALP…YFKETVGGQE (450 aa)) are adenylyl removase. An adenylyl transferase region spans residues 456-956 (EQWTAQLWSL…IYEQVLNNGQ (501 aa)).

The protein belongs to the GlnE family. Mg(2+) is required as a cofactor.

The catalysed reaction is [glutamine synthetase]-O(4)-(5'-adenylyl)-L-tyrosine + phosphate = [glutamine synthetase]-L-tyrosine + ADP. It catalyses the reaction [glutamine synthetase]-L-tyrosine + ATP = [glutamine synthetase]-O(4)-(5'-adenylyl)-L-tyrosine + diphosphate. In terms of biological role, involved in the regulation of glutamine synthetase GlnA, a key enzyme in the process to assimilate ammonia. When cellular nitrogen levels are high, the C-terminal adenylyl transferase (AT) inactivates GlnA by covalent transfer of an adenylyl group from ATP to specific tyrosine residue of GlnA, thus reducing its activity. Conversely, when nitrogen levels are low, the N-terminal adenylyl removase (AR) activates GlnA by removing the adenylyl group by phosphorolysis, increasing its activity. The regulatory region of GlnE binds the signal transduction protein PII (GlnB) which indicates the nitrogen status of the cell. This is Bifunctional glutamine synthetase adenylyltransferase/adenylyl-removing enzyme from Shewanella loihica (strain ATCC BAA-1088 / PV-4).